Consider the following 450-residue polypeptide: Bifunctional protein GlmU (450 aa).

A pyrophosphorylase region spans residues 1-229; sequence MRRHAIILAA…VEEIMGVNDR (229 aa). UDP-N-acetyl-alpha-D-glucosamine contacts are provided by residues 8-11, Lys22, Gln72, and 77-78; these read LAAG and GT. Asp102 is a Mg(2+) binding site. The UDP-N-acetyl-alpha-D-glucosamine site is built by Gly139, Glu154, and Asn227. Asn227 lines the Mg(2+) pocket. The interval 230 to 250 is linker; sequence VMLSQAENAMQRRTNHYHMLN. Residues 251–450 form an N-acetyltransferase region; sequence GVTIIDPDST…RQTTKEGYRK (200 aa). UDP-N-acetyl-alpha-D-glucosamine-binding residues include Arg332 and Lys350. The Proton acceptor role is filled by His362. UDP-N-acetyl-alpha-D-glucosamine contacts are provided by Tyr365 and Asn376. Acetyl-CoA-binding positions include 385 to 386, Ala422, and Arg439; that span reads NY.

The protein in the N-terminal section; belongs to the N-acetylglucosamine-1-phosphate uridyltransferase family. This sequence in the C-terminal section; belongs to the transferase hexapeptide repeat family. Homotrimer. It depends on Mg(2+) as a cofactor.

Its subcellular location is the cytoplasm. It catalyses the reaction alpha-D-glucosamine 1-phosphate + acetyl-CoA = N-acetyl-alpha-D-glucosamine 1-phosphate + CoA + H(+). The enzyme catalyses N-acetyl-alpha-D-glucosamine 1-phosphate + UTP + H(+) = UDP-N-acetyl-alpha-D-glucosamine + diphosphate. The protein operates within nucleotide-sugar biosynthesis; UDP-N-acetyl-alpha-D-glucosamine biosynthesis; N-acetyl-alpha-D-glucosamine 1-phosphate from alpha-D-glucosamine 6-phosphate (route II): step 2/2. It functions in the pathway nucleotide-sugar biosynthesis; UDP-N-acetyl-alpha-D-glucosamine biosynthesis; UDP-N-acetyl-alpha-D-glucosamine from N-acetyl-alpha-D-glucosamine 1-phosphate: step 1/1. Its pathway is bacterial outer membrane biogenesis; LPS lipid A biosynthesis. Its function is as follows. Catalyzes the last two sequential reactions in the de novo biosynthetic pathway for UDP-N-acetylglucosamine (UDP-GlcNAc). The C-terminal domain catalyzes the transfer of acetyl group from acetyl coenzyme A to glucosamine-1-phosphate (GlcN-1-P) to produce N-acetylglucosamine-1-phosphate (GlcNAc-1-P), which is converted into UDP-GlcNAc by the transfer of uridine 5-monophosphate (from uridine 5-triphosphate), a reaction catalyzed by the N-terminal domain. This Staphylococcus aureus (strain MRSA252) protein is Bifunctional protein GlmU.